A 729-amino-acid polypeptide reads, in one-letter code: Fatty acid oxidation complex subunit alpha (729 aa).

An enoyl-CoA hydratase/isomerase region spans residues 1 to 189; that stretch reads MLYKGDTLYL…KIGLVDGVVK (189 aa). Aspartate 296 lines the substrate pocket. Residues 311-729 are 3-hydroxyacyl-CoA dehydrogenase; sequence ETPKQAAVLG…ARPVGDLKTA (419 aa). Residues methionine 324, aspartate 343, 400–402, lysine 407, and serine 429 each bind NAD(+); that span reads IVE. The For 3-hydroxyacyl-CoA dehydrogenase activity role is filled by histidine 450. Asparagine 453 lines the NAD(+) pocket. Asparagine 500 and tyrosine 660 together coordinate substrate. The segment at 708–729 is disordered; sequence RHNEPYYPPVEPARPVGDLKTA.

This sequence in the N-terminal section; belongs to the enoyl-CoA hydratase/isomerase family. The protein in the C-terminal section; belongs to the 3-hydroxyacyl-CoA dehydrogenase family. Heterotetramer of two alpha chains (FadB) and two beta chains (FadA).

The enzyme catalyses a (3S)-3-hydroxyacyl-CoA + NAD(+) = a 3-oxoacyl-CoA + NADH + H(+). It catalyses the reaction a (3S)-3-hydroxyacyl-CoA = a (2E)-enoyl-CoA + H2O. The catalysed reaction is a 4-saturated-(3S)-3-hydroxyacyl-CoA = a (3E)-enoyl-CoA + H2O. It carries out the reaction (3S)-3-hydroxybutanoyl-CoA = (3R)-3-hydroxybutanoyl-CoA. The enzyme catalyses a (3Z)-enoyl-CoA = a 4-saturated (2E)-enoyl-CoA. It catalyses the reaction a (3E)-enoyl-CoA = a 4-saturated (2E)-enoyl-CoA. Its pathway is lipid metabolism; fatty acid beta-oxidation. Involved in the aerobic and anaerobic degradation of long-chain fatty acids via beta-oxidation cycle. Catalyzes the formation of 3-oxoacyl-CoA from enoyl-CoA via L-3-hydroxyacyl-CoA. It can also use D-3-hydroxyacyl-CoA and cis-3-enoyl-CoA as substrate. The chain is Fatty acid oxidation complex subunit alpha from Escherichia coli O157:H7.